Consider the following 442-residue polypeptide: 5-methylthioadenosine/S-adenosylhomocysteine deaminase (442 aa).

Residues H72 and H74 each contribute to the Zn(2+) site. Residues E101 and H194 each contribute to the substrate site. H221 provides a ligand contact to Zn(2+). E224 and D309 together coordinate substrate. D309 serves as a coordination point for Zn(2+).

It belongs to the metallo-dependent hydrolases superfamily. MTA/SAH deaminase family. Zn(2+) is required as a cofactor.

It catalyses the reaction S-adenosyl-L-homocysteine + H2O + H(+) = S-inosyl-L-homocysteine + NH4(+). The catalysed reaction is S-methyl-5'-thioadenosine + H2O + H(+) = S-methyl-5'-thioinosine + NH4(+). In terms of biological role, catalyzes the deamination of 5-methylthioadenosine and S-adenosyl-L-homocysteine into 5-methylthioinosine and S-inosyl-L-homocysteine, respectively. Is also able to deaminate adenosine. The chain is 5-methylthioadenosine/S-adenosylhomocysteine deaminase from Teredinibacter turnerae (strain ATCC 39867 / T7901).